We begin with the raw amino-acid sequence, 458 residues long: Bifunctional protein GlmU (458 aa).

Residues 1 to 230 (MLQIDVVILA…DWEVVGVNDK (230 aa)) form a pyrophosphorylase region. Residues 9–12 (LAAG), Lys23, Gln75, and 80–81 (GT) contribute to the UDP-N-acetyl-alpha-D-glucosamine site. Asp104 serves as a coordination point for Mg(2+). The UDP-N-acetyl-alpha-D-glucosamine site is built by Gly139, Glu155, Asn170, and Asn228. Asn228 provides a ligand contact to Mg(2+). Positions 231-251 (IQLSTLERAHQQDVAKGLMEQ) are linker. An N-acetyltransferase region spans residues 252–458 (GVMFADPARF…NWKRPKKNKD (207 aa)). UDP-N-acetyl-alpha-D-glucosamine contacts are provided by Arg334 and Lys352. His364 functions as the Proton acceptor in the catalytic mechanism. 2 residues coordinate UDP-N-acetyl-alpha-D-glucosamine: Tyr367 and Asn378. Residues Ala381, 387–388 (NY), Ser406, Ala424, and Arg441 each bind acetyl-CoA.

This sequence in the N-terminal section; belongs to the N-acetylglucosamine-1-phosphate uridyltransferase family. In the C-terminal section; belongs to the transferase hexapeptide repeat family. Homotrimer. The cofactor is Mg(2+).

The protein resides in the cytoplasm. The enzyme catalyses alpha-D-glucosamine 1-phosphate + acetyl-CoA = N-acetyl-alpha-D-glucosamine 1-phosphate + CoA + H(+). It carries out the reaction N-acetyl-alpha-D-glucosamine 1-phosphate + UTP + H(+) = UDP-N-acetyl-alpha-D-glucosamine + diphosphate. Its pathway is nucleotide-sugar biosynthesis; UDP-N-acetyl-alpha-D-glucosamine biosynthesis; N-acetyl-alpha-D-glucosamine 1-phosphate from alpha-D-glucosamine 6-phosphate (route II): step 2/2. It functions in the pathway nucleotide-sugar biosynthesis; UDP-N-acetyl-alpha-D-glucosamine biosynthesis; UDP-N-acetyl-alpha-D-glucosamine from N-acetyl-alpha-D-glucosamine 1-phosphate: step 1/1. It participates in bacterial outer membrane biogenesis; LPS lipid A biosynthesis. Catalyzes the last two sequential reactions in the de novo biosynthetic pathway for UDP-N-acetylglucosamine (UDP-GlcNAc). The C-terminal domain catalyzes the transfer of acetyl group from acetyl coenzyme A to glucosamine-1-phosphate (GlcN-1-P) to produce N-acetylglucosamine-1-phosphate (GlcNAc-1-P), which is converted into UDP-GlcNAc by the transfer of uridine 5-monophosphate (from uridine 5-triphosphate), a reaction catalyzed by the N-terminal domain. The protein is Bifunctional protein GlmU of Nitrosomonas eutropha (strain DSM 101675 / C91 / Nm57).